The following is a 293-amino-acid chain: Formamidopyrimidine-DNA glycosylase (293 aa).

The active-site Schiff-base intermediate with DNA is the proline 2. Glutamate 3 (proton donor) is an active-site residue. The active-site Proton donor; for beta-elimination activity is the lysine 58. Positions 104, 123, and 166 each coordinate DNA. Residues 257 to 293 form an FPG-type zinc finger; the sequence is KVYDREGETCKTPACGGTIKRFTQNGRSTFWCPKCQK. Arginine 283 serves as the catalytic Proton donor; for delta-elimination activity.

It belongs to the FPG family. Monomer. Zn(2+) is required as a cofactor.

The enzyme catalyses Hydrolysis of DNA containing ring-opened 7-methylguanine residues, releasing 2,6-diamino-4-hydroxy-5-(N-methyl)formamidopyrimidine.. The catalysed reaction is 2'-deoxyribonucleotide-(2'-deoxyribose 5'-phosphate)-2'-deoxyribonucleotide-DNA = a 3'-end 2'-deoxyribonucleotide-(2,3-dehydro-2,3-deoxyribose 5'-phosphate)-DNA + a 5'-end 5'-phospho-2'-deoxyribonucleoside-DNA + H(+). Functionally, involved in base excision repair of DNA damaged by oxidation or by mutagenic agents. Acts as a DNA glycosylase that recognizes and removes damaged bases. Has a preference for oxidized purines, such as 7,8-dihydro-8-oxoguanine (8-oxoG). Has AP (apurinic/apyrimidinic) lyase activity and introduces nicks in the DNA strand. Cleaves the DNA backbone by beta-delta elimination to generate a single-strand break at the site of the removed base with both 3'- and 5'-phosphates. The protein is Formamidopyrimidine-DNA glycosylase of Bradyrhizobium diazoefficiens (strain JCM 10833 / BCRC 13528 / IAM 13628 / NBRC 14792 / USDA 110).